A 191-amino-acid polypeptide reads, in one-letter code: uncharacterized protein (191 aa).

To B.subtilis GlpP.

This is an uncharacterized protein from Escherichia coli (strain K12).